A 502-amino-acid polypeptide reads, in one-letter code: Packaging protein 1 (502 aa).

The interval 99 to 122 (EAMEGQNPTCSRHESAYPIQSQVS) is disordered. Position 226-233 (226-233 (GPTGCGKS)) interacts with ATP. A DNA-binding region spans residues 495 to 502 (RYYHSKKK).

Belongs to the adenoviridae packaging protein 1 family. In terms of assembly, homodimer. Part of a genome packaging complex composed of packaging proteins 1, 2 and 3; this complex specifically binds to the packaging sequence on the left end of viral genomic DNA and performs packaging of the viral genome. Interacts with protein 33K.

It is found in the virion. It localises to the host nucleus. The protein resides in the host nucleoplasm. The protein localises to the host nucleolus. In terms of biological role, component of the packaging machinery which encapsidates the viral DNA into preformed capsids and transcriptional activator of the viral major late promoter (MLP). Binds, along with packaging proteins 2 and 3, to the specific packaging sequence on the left end of viral genomic DNA and displays ATPase activity thereby providing the power stroke of the packaging machinery. The activity of packaging protein IVa2 is stimulated by protein 33K which acts as a terminase. May be the protein that pumps DNA into the capsid powered by ATP hydrolysis. Specifically binds to the 5'-CG-3' nucleotides of the repeats making up the packaging sequence. Component of the DEF-A and DEF-B transcription factors that bind downstream elements of the major late promoter (MLP), and stimulate transcription from the MLP after initiation of viral DNA replication. DEF-A is a heterodimer packaging proteins 1 and 2 and DEF-B is a homodimer of packaging protein 1. The polypeptide is Packaging protein 1 (Canis lupus familiaris (Dog)).